The primary structure comprises 209 residues: Redox-sensing transcriptional repressor Rex (209 aa).

Residues 16–55 constitute a DNA-binding region (H-T-H motif); it reads VYIQVLTGLKRDGVEVISSEKLARACSVNPSQIRKDLAYF. 90–95 serves as a coordination point for NAD(+); that stretch reads GVGNLG.

This sequence belongs to the transcriptional regulatory Rex family. In terms of assembly, homodimer.

Its subcellular location is the cytoplasm. In terms of biological role, modulates transcription in response to changes in cellular NADH/NAD(+) redox state. The polypeptide is Redox-sensing transcriptional repressor Rex (Maridesulfovibrio salexigens (strain ATCC 14822 / DSM 2638 / NCIMB 8403 / VKM B-1763) (Desulfovibrio salexigens)).